Consider the following 166-residue polypeptide: ATP synthase subunit b (166 aa).

Residues glutamine 7–leucine 27 traverse the membrane as a helical segment.

This sequence belongs to the ATPase B chain family. As to quaternary structure, F-type ATPases have 2 components, F(1) - the catalytic core - and F(0) - the membrane proton channel. F(1) has five subunits: alpha(3), beta(3), gamma(1), delta(1), epsilon(1). F(0) has three main subunits: a(1), b(2) and c(10-14). The alpha and beta chains form an alternating ring which encloses part of the gamma chain. F(1) is attached to F(0) by a central stalk formed by the gamma and epsilon chains, while a peripheral stalk is formed by the delta and b chains.

It localises to the cell inner membrane. Its function is as follows. F(1)F(0) ATP synthase produces ATP from ADP in the presence of a proton or sodium gradient. F-type ATPases consist of two structural domains, F(1) containing the extramembraneous catalytic core and F(0) containing the membrane proton channel, linked together by a central stalk and a peripheral stalk. During catalysis, ATP synthesis in the catalytic domain of F(1) is coupled via a rotary mechanism of the central stalk subunits to proton translocation. Component of the F(0) channel, it forms part of the peripheral stalk, linking F(1) to F(0). In Flavobacterium psychrophilum (strain ATCC 49511 / DSM 21280 / CIP 103535 / JIP02/86), this protein is ATP synthase subunit b.